The following is a 201-amino-acid chain: Small ribosomal subunit protein uS4c (201 aa).

The disordered stretch occupies residues 20-43; that stretch reads GLTSKRPRAGSDLRNQSRSGKRSQ. Positions 89 to 149 constitute an S4 RNA-binding domain; that stretch reads MRLDNILFRL…NEQKSRALIQ (61 aa).

This sequence belongs to the universal ribosomal protein uS4 family. Part of the 30S ribosomal subunit. Contacts protein S5. The interaction surface between S4 and S5 is involved in control of translational fidelity.

Its subcellular location is the plastid. The protein resides in the chloroplast. One of the primary rRNA binding proteins, it binds directly to 16S rRNA where it nucleates assembly of the body of the 30S subunit. Its function is as follows. With S5 and S12 plays an important role in translational accuracy. This is Small ribosomal subunit protein uS4c (rps4) from Vitis vinifera (Grape).